Here is a 1499-residue protein sequence, read N- to C-terminus: DENN domain-containing protein 4B (1499 aa).

The disordered stretch occupies residues 26 to 45 (PEEKWVPEPTGPLRPPRPAE). Residues 34 to 44 (PTGPLRPPRPA) are compositionally biased toward pro residues. The MABP domain maps to 44–203 (AEPITDVAVI…AVYLCYKVGL (160 aa)). Positions 195–369 (VYLCYKVGLA…NVPFPSPQRP (175 aa)) constitute a uDENN domain. A cDENN domain is found at 390–526 (PLPLSGASFL…PYKLLLATLT (137 aa)). The dDENN domain occupies 528-644 (LYQQLDQTYT…ECSFGSARHA (117 aa)). The tract at residues 717–744 (PQEQQGALPVPGPSRSAPSSPAPRRTKQ) is disordered. The segment covering 729 to 739 (PSRSAPSSPAP) has biased composition (low complexity). PPR repeat units lie at residues 775 to 811 (WFLC…VVLP) and 812 to 846 (DEVC…GIVP). Disordered stretches follow at residues 890-968 (PLKD…ARGT), 988-1115 (PRGS…SLGS), and 1204-1226 (RPSA…APAP). A compositionally biased stretch (low complexity) spans 897–915 (QQQQQQQQQQQKQQVAEQQ). Residues 933-942 (RPLQRQTTWA) are compositionally biased toward polar residues. At S951 the chain carries Phosphoserine. Over residues 1074–1083 (IPPPELPSDL) the composition is skewed to pro residues. A Phosphoserine modification is found at S1090. The span at 1103-1115 (GSTASESSASLGS) shows a compositional bias: low complexity.

Its subcellular location is the golgi apparatus. Guanine nucleotide exchange factor (GEF) which may activate RAB10. Promotes the exchange of GDP to GTP, converting inactive GDP-bound Rab proteins into their active GTP-bound form. This is DENN domain-containing protein 4B (Dennd4b) from Mus musculus (Mouse).